The sequence spans 446 residues: Cytochrome P450 monooxygenase ATR14 (446 aa).

A disordered region spans residues 403-446 (NFTYPDEFRPDRWLDDRDQKEYEHDHGDAMQPFSVGPRDCPSQK). The segment covering 408–430 (DEFRPDRWLDDRDQKEYEHDHGD) has biased composition (basic and acidic residues). Cysteine 442 is a heme binding site.

It belongs to the cytochrome P450 family. The cofactor is heme.

The protein operates within mycotoxin biosynthesis. In terms of biological role, cytochrome P450 monooxygenase; part of the core atranone cluster (CAC) which products are predicted to catalyze most or all steps of mycotoxin atranone synthesis, starting from geranylgeranyl pyrophosphate (GGPP). The initial cyclization of GGPP to dolabellane is probably performed by the terpene cyclase ATR13. The Baeyer-Villiger oxidation near the end of the atranone synthesis, which converts atranones D and E to atranones F and G is predicted to be catalyzed by the monooxygenase ATR8. Of the CAC's other predicted gene products, the reducing PKS ATR6 might synthesize a polyketide chain. This polyketide is probably transferred onto the atranone backbone by the polyketide transferase ATR5. Other predicted CAC products include 4 oxygenases (ATR2, ATR3, ATR4, and ATR14), 3 short-chain reductases (ATR7, ATR9, and ATR10), and a methyltransferase (ATR12). These may all be involved in the various steps of atranone biosynthesis, although their specific roles must await experimental determination. This is Cytochrome P450 monooxygenase ATR14 from Stachybotrys chlorohalonatus (strain IBT 40285).